Consider the following 350-residue polypeptide: Methylthioribose-1-phosphate isomerase (350 aa).

Substrate is bound by residues 47–49, R90, and Q197; that span reads RGA. The Proton donor role is filled by D238. 248–249 lines the substrate pocket; sequence NK.

This sequence belongs to the eIF-2B alpha/beta/delta subunits family. MtnA subfamily.

It carries out the reaction 5-(methylsulfanyl)-alpha-D-ribose 1-phosphate = 5-(methylsulfanyl)-D-ribulose 1-phosphate. It participates in amino-acid biosynthesis; L-methionine biosynthesis via salvage pathway; L-methionine from S-methyl-5-thio-alpha-D-ribose 1-phosphate: step 1/6. Functionally, catalyzes the interconversion of methylthioribose-1-phosphate (MTR-1-P) into methylthioribulose-1-phosphate (MTRu-1-P). This chain is Methylthioribose-1-phosphate isomerase, found in Nitratidesulfovibrio vulgaris (strain DP4) (Desulfovibrio vulgaris).